A 222-amino-acid polypeptide reads, in one-letter code: uncharacterized protein (222 aa).

Transmembrane regions (helical) follow at residues 25 to 45 (LLWL…PATA), 80 to 100 (LLGA…ALIY), 111 to 131 (FAIM…FPLL), and 160 to 180 (LALT…VPFF).

The protein resides in the cell membrane. This is an uncharacterized protein from Bacillus subtilis (strain 168).